Reading from the N-terminus, the 993-residue chain is MGSGRVPGLCLLVLLVHARAAQYSKAAQDVDECVEGTDNCHIDAICQNTPRSYKCICKSGYTGDGKHCKDVDECEREDNAGCVHDCVNIPGNYRCTCYDGFHLAHDGHNCLDVDECAEGNGGCQQSCVNMMGSYECHCREGFFLSDNQHTCIQRPEEGMNCMNKNHGCAHICRETPKGGIACECRPGFELTKNQRDCKLTCNYGNGGCQHTCDDTEQGPRCGCHIKFVLHTDGKTCIETCAVNNGGCDSKCHDAATGVHCTCPVGFMLQPDRKTCKDIDECRLNNGGCDHICRNTVGSFECSCKKGYKLLINERNCQDIDECSFDRTCDHICVNTPGSFQCLCHRGYLLYGITHCGDVDECSINRGGCRFGCINTPGSYQCTCPAGQGRLHWNGKDCTEPLKCQGSPGASKAMLSCNRSGKKDTCALTCPSRARFLPESENGFTVSCGTPSPRAAPARAGHNGNSTNSNHCHEAAVLSIKQRASFKIKDAKCRLHLRNKGKTEEAGRITGPGGAPCSECQVTFIHLKCDSSRKGKGRRARTPPGKEVTRLTLELEAEVRAEETTASCGLPCLRQRMERRLKGSLKMLRKSINQDRFLLRLAGLDYELAHKPGLVAGERAEPMESCRPGQHRAGTKCVSCPQGTYYHGQTEQCVPCPAGTFQEREGQLSCDLCPGSDAHGPLGATNVTTCAGQCPPGQHSVDGFKPCQPCPRGTYQPEAGRTLCFPCGGGLTTKHEGAISFQDCDTKVQCSPGHYYNTSIHRCIRCAMGSYQPDFRQNFCSRCPGNTSTDFDGSTSVAQCKNRQCGGELGEFTGYIESPNYPGNYPAGVECIWNINPPPKRKILIVVPEIFLPSEDECGDVLVMRKNSSPSSITTYETCQTYERPIAFTARSRKLWINFKTSEANSARGFQIPYVTYDEDYEQLVEDIVRDGRLYASENHQEILKDKKLIKAFFEVLAHPQNYFKYTEKHKEMLPKSFIKLLRSKVSSFLRPYK.

A signal peptide spans 1–20 (MGSGRVPGLCLLVLLVHARA). The region spanning 29–69 (DVDECVEGTDNCHIDAICQNTPRSYKCICKSGYTGDGKHCK) is the EGF-like 1; calcium-binding domain. 26 disulfide bridges follow: C33/C46, C40/C55, C57/C68, C74/C86, C82/C95, C97/C110, C116/C127, C123/C136, C161/C172, C168/C182, C184/C197, C201/C212, C208/C221, C223/C236, C240/C251, C247/C260, C262/C275, C281/C292, C288/C301, C303/C316, C322/C332, C328/C341, C343/C355, C361/C372, C368/C381, and C383/C397. In terms of domain architecture, EGF-like 2; calcium-binding spans 70–111 (DVDECEREDNAGCVHDCVNIPGNYRCTCYDGFHLAHDGHNCL). Positions 112 to 148 (DVDECAEGNGGCQQSCVNMMGSYECHCREGFFLSDNQ) constitute an EGF-like 3; calcium-binding domain. 3 consecutive EGF-like domains span residues 157–198 (EGMN…RDCK), 199–237 (LTCN…KTCI), and 238–276 (ETCA…KTCK). Residues 277–317 (DIDECRLNNGGCDHICRNTVGSFECSCKKGYKLLINERNCQ) enclose the EGF-like 7; calcium-binding domain. The region spanning 318-356 (DIDECSFDRTCDHICVNTPGSFQCLCHRGYLLYGITHCG) is the EGF-like 8; calcium-binding domain. One can recognise an EGF-like 9; calcium-binding domain in the interval 357–398 (DVDECSINRGGCRFGCINTPGSYQCTCPAGQGRLHWNGKDCT). 5 N-linked (GlcNAc...) asparagine glycosylation sites follow: N417, N464, N685, N756, and N785. 2 cysteine pairs are disulfide-bonded: C804–C830 and C857–C878. The 113-residue stretch at 804–916 (CGGELGEFTG…RGFQIPYVTY (113 aa)) folds into the CUB domain.

In terms of assembly, forms homooligomers. Forms heterooligomers with SCUBE1 and SCUBE2. Interacts with TGFBR2 through the CUB domain; this interaction does not affect TGFB1-binding to TGFBR2. Interacts with BMP2, BMP4 and BMP7; the interaction is mediated by the CUB domain. Interacts with BMPR1A, BMPR1B and BMPR2; the interaction with BMPR1A and BMPR1B is BMP2- and BMP4-dependent. Post-translationally, N-glycosylated. In terms of processing, proteolytic cleavage produces a CUB-containing C-terminal fragment that retains the ability to bind to TGFBR2. This reaction is catalyzed in vitro by MMP2 and, to a lesser extent, by MMP9. In terms of tissue distribution, highly expressed in osteoblasts. In normal lung, mainly expressed in bronchial epithelial cells. Tends to be up-regulated in lung cancer cells.

It localises to the secreted. The protein localises to the cell surface. Its function is as follows. Is a positive regulator of the BMP signaling pathway, required for proper chondrogenesis, osteogenesis and skeletal development. It acts as a coreceptor for BMP ligands, particularly BMP2 and BMP4, facilitating their interactions with BMP type I receptors. It is required for ligand-induced recruitment of BMP receptors to lipid rafts. Binds to TGFBR2 and activates TGFB signaling. In lung cancer cells, could serve as an endogenous autocrine and paracrine ligand of TGFBR2, which could regulate TGFBR2 signaling and hence modulate epithelial-mesenchymal transition and cancer progression. The polypeptide is Signal peptide, CUB and EGF-like domain-containing protein 3 (Homo sapiens (Human)).